Here is a 350-residue protein sequence, read N- to C-terminus: 3-isopropylmalate dehydrogenase (350 aa).

An NAD(+)-binding site is contributed by 76 to 87; the sequence is GPKWDNAPKRPE. The substrate site is built by R94, R104, R132, and D217. Mg(2+)-binding residues include D217, D241, and D245. 275–287 lines the NAD(+) pocket; sequence GSAPDIANQNIAN.

The protein belongs to the isocitrate and isopropylmalate dehydrogenases family. LeuB type 1 subfamily. Homodimer. Mg(2+) serves as cofactor. The cofactor is Mn(2+).

The protein localises to the cytoplasm. The enzyme catalyses (2R,3S)-3-isopropylmalate + NAD(+) = 4-methyl-2-oxopentanoate + CO2 + NADH. It participates in amino-acid biosynthesis; L-leucine biosynthesis; L-leucine from 3-methyl-2-oxobutanoate: step 3/4. Catalyzes the oxidation of 3-carboxy-2-hydroxy-4-methylpentanoate (3-isopropylmalate) to 3-carboxy-4-methyl-2-oxopentanoate. The product decarboxylates to 4-methyl-2 oxopentanoate. The chain is 3-isopropylmalate dehydrogenase from Listeria monocytogenes serotype 4b (strain F2365).